The chain runs to 1020 residues: FERM domain-containing protein 4A (1020 aa).

The FERM domain occupies 5–307 (RRCQVHLLDD…SQHQFYLDRK (303 aa)). The necessary for interaction with CYTH1 stretch occupies residues 343–405 (KGKIISGSSG…RLCLREAELT (63 aa)). Low complexity predominate over residues 351 to 367 (SGSLLSSGSQESDSSQS). The interval 351-371 (SGSLLSSGSQESDSSQSAKKD) is disordered. A coiled-coil region spans residues 367–401 (SAKKDMLAALKSRQEALEETLRQRLEELKRLCLRE). At Ser-515 the chain carries Phosphoserine. The tract at residues 538-665 (DEDSQVTSTI…MPSTPDLRVR (128 aa)) is disordered. Positions 542–551 (QVTSTISPLQ) are enriched in polar residues. Pro residues predominate over residues 556–572 (GLPPRPPSSHNRPPPPQ). The tract at residues 565–920 (HNRPPPPQSL…QWYQRSTASH (356 aa)) is necessary for tight junction and adherens junction localization; Requires for interaction with PARD3. A phosphoserine mark is found at Ser-590 and Ser-601. Residues 609–624 (VKKRSSHGHSSSHKRF) show a composition bias toward basic residues. Over residues 626-658 (STGSCTEAGVSSSLQNSPIRSLPHWNSQSSMPS) the composition is skewed to polar residues. 2 positions are modified to phosphoserine: Ser-666 and Ser-696. 2 disordered regions span residues 698 to 741 (ESQG…HSSS) and 757 to 810 (AEDS…QSQP). Positions 773-796 (RAAGALGSASSGSMPNLAARSGAA) are enriched in low complexity. Phosphoserine occurs at positions 785, 854, and 882. Disordered stretches follow at residues 862-949 (KESW…STFV) and 961-1020 (CKAT…STDE). Over residues 893 to 910 (DGAHDKGSGRAAVSDELR) the composition is skewed to basic and acidic residues. The segment covering 927–947 (SHTSSTSSDSGSQYSTSSQST) has biased composition (low complexity). Polar residues-rich tracts occupy residues 967-981 (ALPQSQRSSTPSSEI), 994-1004 (TWQTGEATENS), and 1011-1020 (ESPTHQSTDE).

In terms of assembly, interacts (via coiled-coil domain) with CYTH1 (via coiled-coil domain). Interacts with PARD3 (via coiled-coil domain). Found in a complex with PARD3, CYTH1 and FRMD4A. Interacts with CYTH2. Interacts with CYTH3.

It is found in the cytoplasm. It localises to the cytoskeleton. The protein resides in the cell junction. The protein localises to the adherens junction. Its subcellular location is the tight junction. In terms of biological role, scaffolding protein that regulates epithelial cell polarity by connecting ARF6 activation with the PAR3 complex. Plays a redundant role with FRMD4B in epithelial polarization. May regulate MAPT secretion by activating ARF6-signaling. The sequence is that of FERM domain-containing protein 4A (Frmd4a) from Mus musculus (Mouse).